We begin with the raw amino-acid sequence, 104 residues long: Flagellar hook-basal body complex protein FliE (104 aa).

It belongs to the FliE family.

The protein localises to the bacterial flagellum basal body. This is Flagellar hook-basal body complex protein FliE from Escherichia coli (strain 55989 / EAEC).